The following is a 634-amino-acid chain: Chaperone protein DnaK (634 aa).

A Phosphothreonine; by autocatalysis modification is found at Thr-193. The tract at residues 597 to 634 is disordered; that stretch reads GNANNTSSTESTTTNNNNEEDSKVVDSDYQEIDKKDGK. Positions 600–613 are enriched in low complexity; the sequence is NNTSSTESTTTNNN. Residues 616–634 show a composition bias toward basic and acidic residues; the sequence is EDSKVVDSDYQEIDKKDGK.

It belongs to the heat shock protein 70 family.

In terms of biological role, acts as a chaperone. The protein is Chaperone protein DnaK of Ehrlichia canis (strain Jake).